A 347-amino-acid polypeptide reads, in one-letter code: Anthranilate phosphoribosyltransferase (347 aa).

Residues glycine 86, 89-90 (GD), threonine 94, 96-99 (NIST), 114-122 (KHGNRSVSS), and serine 126 each bind 5-phospho-alpha-D-ribose 1-diphosphate. Anthranilate is bound at residue glycine 86. Serine 98 provides a ligand contact to Mg(2+). Asparagine 117 contributes to the anthranilate binding site. Arginine 172 contributes to the anthranilate binding site. Aspartate 230 and glutamate 231 together coordinate Mg(2+).

Belongs to the anthranilate phosphoribosyltransferase family. As to quaternary structure, homodimer. Requires Mg(2+) as cofactor.

It catalyses the reaction N-(5-phospho-beta-D-ribosyl)anthranilate + diphosphate = 5-phospho-alpha-D-ribose 1-diphosphate + anthranilate. It functions in the pathway amino-acid biosynthesis; L-tryptophan biosynthesis; L-tryptophan from chorismate: step 2/5. Functionally, catalyzes the transfer of the phosphoribosyl group of 5-phosphorylribose-1-pyrophosphate (PRPP) to anthranilate to yield N-(5'-phosphoribosyl)-anthranilate (PRA). This chain is Anthranilate phosphoribosyltransferase, found in Shewanella frigidimarina (strain NCIMB 400).